The sequence spans 301 residues: Homoserine O-acetyltransferase (301 aa).

Catalysis depends on Cys-142, which acts as the Acyl-thioester intermediate. The substrate site is built by Lys-163 and Ser-192. Residue His-235 is the Proton acceptor of the active site. Glu-237 is an active-site residue. Substrate is bound at residue Arg-249.

This sequence belongs to the MetA family.

The protein resides in the cytoplasm. The catalysed reaction is L-homoserine + acetyl-CoA = O-acetyl-L-homoserine + CoA. It functions in the pathway amino-acid biosynthesis; L-methionine biosynthesis via de novo pathway; O-acetyl-L-homoserine from L-homoserine: step 1/1. In terms of biological role, transfers an acetyl group from acetyl-CoA to L-homoserine, forming acetyl-L-homoserine. This chain is Homoserine O-acetyltransferase, found in Bacillus cytotoxicus (strain DSM 22905 / CIP 110041 / 391-98 / NVH 391-98).